Reading from the N-terminus, the 159-residue chain is MKITILAVGKLKEKYWKQAIAEYEKRLGPYTKIDIIEVPDEKAPENMSDKEIEQVKEKEGQRILAKIKPQSTVITLEIQGKMLSSEGLAQELNQRMTQGQSDFVFVIGGSNGLHKDVLQRSNYALSFSKMTFPHQMMRVVLIEQVYRAFKIMRGEAYHK.

S-adenosyl-L-methionine-binding positions include Leu76, Gly108, and 127–132 (FSKMTF).

It belongs to the RNA methyltransferase RlmH family. Homodimer.

It is found in the cytoplasm. It carries out the reaction pseudouridine(1915) in 23S rRNA + S-adenosyl-L-methionine = N(3)-methylpseudouridine(1915) in 23S rRNA + S-adenosyl-L-homocysteine + H(+). Its function is as follows. Specifically methylates the pseudouridine at position 1915 (m3Psi1915) in 23S rRNA. The chain is Ribosomal RNA large subunit methyltransferase H from Staphylococcus aureus (strain Mu3 / ATCC 700698).